Here is an 84-residue protein sequence, read N- to C-terminus: Large ribosomal subunit protein bL27c (84 aa).

A disordered region spans residues 1–23; that stretch reads MAHKKGAGSTKNGRDSNAKRLGV.

This sequence belongs to the bacterial ribosomal protein bL27 family.

Its subcellular location is the plastid. It is found in the chloroplast. This Thalassiosira pseudonana (Marine diatom) protein is Large ribosomal subunit protein bL27c.